The following is a 638-amino-acid chain: MAAAADLVVPTLAIRSSVAVELWSSAGSKQPFEHKPHLPREETKSSRSICFSSNGRYFAYSNGQEVKVLQASRDSAASWPVICVLPRPKAFYLQFSPRGSYLCTWEHYAITKDRPEGSPNLLVYEVATGVEVFAIVQKNQADWQPSWSADESIFALVVGGEALFYDLGEGAEKGFATTSRKIGGSRGGMLSLGPGNCPPFLAFYTPGAKGAPSMCKLYKYPALGQNQTVACKSFFQADRVEMLWNKRGSGLLLLTSTEVDKSGASYYGNQAVHFMATKGDTCSVPLSKEGPVHCVKWSPKATEFVVVYGFMPSKAALYNLKCDVVFDFGEGPRNCAYFNPFGNLIALAGFGNLPGAVEVWDVSKREKLANLKCADTTVFEWHPNGEWFVTATTAPRLRISNGFKVYHYSGALLHETMWPQGQELLGIEWQQFADKTFSEPKITKAKHEGIKSSQPEASKKAYTPPHLRLLKEGKNPEKYLPQPSIPGLAPTAAAGGVNGNKRNNKNKQRSARKDVNVVNGGDADSAPTEVVDQAAPVARQSPVFVAAEERKPQHTPRQKYQPDNAADQPPNSYGQGHPNGQHISDKERKIRSVAKKLSDIKKLKVRRSQGENLELNQLNKIKMEAQYLDELKALKQSA.

WD repeat units lie at residues 287-329 (SKEG…FDFG) and 331-370 (GPRNCAYFNPFGNLIALAGFGNLPGAVEVWDVSKREKLAN). Over residues 441-450 (KITKAKHEGI) the composition is skewed to basic and acidic residues. Positions 441–593 (KITKAKHEGI…SDKERKIRSV (153 aa)) are disordered. The residue at position 463 (Thr-463) is a Phosphothreonine. A compositionally biased stretch (low complexity) spans 492-501 (AAAGGVNGNK). A compositionally biased stretch (basic and acidic residues) spans 583 to 593 (ISDKERKIRSV).

This sequence belongs to the WD repeat EIF2A family.

Functions in the early steps of protein synthesis of a small number of specific mRNAs. Acts by directing the binding of methionyl-tRNAi to 40S ribosomal subunits. In contrast to the eIF-2 complex, it binds methionyl-tRNAi to 40S subunits in a codon-dependent manner, whereas the eIF-2 complex binds methionyl-tRNAi to 40S subunits in a GTP-dependent manner. This Drosophila melanogaster (Fruit fly) protein is Eukaryotic translation initiation factor 2A.